We begin with the raw amino-acid sequence, 262 residues long: DNA repair protein RecO (262 aa).

This sequence belongs to the RecO family.

Its function is as follows. Involved in DNA repair and RecF pathway recombination. The polypeptide is DNA repair protein RecO (Enterococcus faecalis (strain ATCC 700802 / V583)).